The sequence spans 232 residues: 7-cyano-7-deazaguanine synthase (232 aa).

7 to 17 (LSGGLDSTVVT) contacts ATP. 4 residues coordinate Zn(2+): Cys-195, Cys-206, Cys-209, and Cys-212.

The protein belongs to the QueC family. It depends on Zn(2+) as a cofactor.

The catalysed reaction is 7-carboxy-7-deazaguanine + NH4(+) + ATP = 7-cyano-7-deazaguanine + ADP + phosphate + H2O + H(+). It participates in purine metabolism; 7-cyano-7-deazaguanine biosynthesis. Functionally, catalyzes the ATP-dependent conversion of 7-carboxy-7-deazaguanine (CDG) to 7-cyano-7-deazaguanine (preQ(0)). The polypeptide is 7-cyano-7-deazaguanine synthase (Methanocaldococcus jannaschii (strain ATCC 43067 / DSM 2661 / JAL-1 / JCM 10045 / NBRC 100440) (Methanococcus jannaschii)).